The following is a 775-amino-acid chain: Chondroitin sulfate synthase 2 (775 aa).

The Cytoplasmic portion of the chain corresponds to 1-15; the sequence is MRASLLLSVLRPAGP. Residues 16 to 34 form a helical; Signal-anchor for type II membrane protein membrane-spanning segment; that stretch reads VAVGISLGFTLSLLSVTWV. Topologically, residues 35-775 are lumenal; that stretch reads EEPCGPGPPQ…LFEQEQGNST (741 aa). The tract at residues 37 to 100 is disordered; it reads PCGPGPPQPG…YHPAQPGQAA (64 aa). Over residues 54-66 the composition is skewed to polar residues; sequence GNTNAARRPNSVQ. 2 N-linked (GlcNAc...) asparagine glycosylation sites follow: Asn138 and Asn361. Asp617 lines the a divalent metal cation pocket.

It belongs to the chondroitin N-acetylgalactosaminyltransferase family. Interacts with PRKN. Requires Mn(2+) as cofactor. It depends on Co(2+) as a cofactor. In terms of tissue distribution, ubiquitous. Highly expressed in pancreas, ovary, brain, heart, skeletal muscle, colon, kidney, liver, stomach, spleen and placenta. Expressed in brain, spleen, ovary, testis, lung and peripheral mononuclear cells. As to expression, also ubiquitous.

It localises to the golgi apparatus. The protein resides in the golgi stack membrane. Its subcellular location is the cytoplasm. The protein localises to the cytosol. It is found in the mitochondrion. It localises to the mitochondrion matrix. The catalysed reaction is 3-O-(beta-D-GlcA-(1-&gt;3)-beta-D-GalNAc-(1-&gt;4)-beta-D-GlcA-(1-&gt;3)-beta-D-Gal-(1-&gt;3)-beta-D-Gal-(1-&gt;4)-beta-D-Xyl)-L-seryl-[protein] + UDP-N-acetyl-alpha-D-galactosamine = 3-O-(beta-D-GalNAc-(1-&gt;4)-beta-D-GlcA-(1-&gt;3)-beta-D-GalNAc-(1-&gt;4)-beta-D-GlcA-(1-&gt;3)-beta-D-Gal-(1-&gt;3)-beta-D-Gal-(1-&gt;4)-beta-D-Xyl)-L-seryl-[protein] + UDP + H(+). It carries out the reaction 3-O-{beta-D-GlcA-(1-&gt;3)-[beta-D-GalNAc-(1-&gt;4)-beta-D-GlcA-(1-&gt;3)](n)-beta-D-GalNAc-(1-&gt;4)-beta-D-GlcA-(1-&gt;3)-beta-D-Gal-(1-&gt;3)-beta-D-Gal-(1-&gt;4)-beta-D-Xyl}-L-seryl-[protein] + UDP-N-acetyl-alpha-D-galactosamine = 3-O-{[beta-D-GalNAc-(1-&gt;4)-beta-D-GlcA-(1-&gt;3)](n+1)-beta-D-GalNAc-(1-&gt;4)-beta-D-GlcA-(1-&gt;3)-beta-D-Gal-(1-&gt;3)-beta-D-Gal-(1-&gt;4)-beta-D-Xyl}-L-seryl-[protein] + UDP + H(+). It catalyses the reaction 3-O-(beta-D-GalNAc-(1-&gt;4)-beta-D-GlcA-(1-&gt;3)-beta-D-Gal-(1-&gt;3)-beta-D-Gal-(1-&gt;4)-beta-D-Xyl)-L-seryl-[protein] + UDP-alpha-D-glucuronate = 3-O-(beta-D-GlcA-(1-&gt;3)-beta-D-GalNAc-(1-&gt;4)-beta-D-GlcA-(1-&gt;3)-beta-D-Gal-(1-&gt;3)-beta-D-Gal-(1-&gt;4)-beta-D-Xyl)-L-seryl-[protein] + UDP + H(+). The enzyme catalyses 3-O-{[beta-D-GalNAc-(1-&gt;4)-beta-D-GlcA-(1-&gt;3)](n)-beta-D-GalNAc-(1-&gt;4)-beta-D-GlcA-(1-&gt;3)-beta-D-Gal-(1-&gt;3)-beta-D-Gal-(1-&gt;4)-beta-D-Xyl}-L-seryl-[protein] + UDP-alpha-D-glucuronate = 3-O-{beta-D-GlcA-(1-&gt;3)-[beta-D-GalNAc-(1-&gt;4)-beta-D-GlcA-(1-&gt;3)](n)-beta-D-GalNAc-(1-&gt;4)-beta-D-GlcA-(1-&gt;3)-beta-D-Gal-(1-&gt;3)-beta-D-Gal-(1-&gt;4)-beta-D-Xyl}-L-seryl-[protein] + UDP + H(+). In terms of biological role, has both beta-1,3-glucuronic acid and beta-1,4-N-acetylgalactosamine transferase activity. Transfers glucuronic acid (GlcUA) from UDP-GlcUA and N-acetylgalactosamine (GalNAc) from UDP-GalNAc to the non-reducing end of the elongating chondroitin polymer. Seems to act as a specific activating factor for CHSY1 in chondroitin polymerization. Its function is as follows. May facilitate PRKN transport into the mitochondria. In collaboration with PRKN, may enhance cell viability and protect cells from oxidative stress. The protein is Chondroitin sulfate synthase 2 of Homo sapiens (Human).